The chain runs to 413 residues: THAP domain-containing protein 5 (413 aa).

The THAP-type zinc-finger motif lies at 1–85; the sequence is MPRYCAASYC…LKHTAVPTIF (85 aa). Residues 84–118 form a disordered region; the sequence is IFSSPDDEEKGSSQNSPQEIRREDQEETTKNVESK. Residues 102–118 are compositionally biased toward basic and acidic residues; it reads EIRREDQEETTKNVESK. Residues 375–399 are a coiled coil; the sequence is RLRSLEALIGQLKQENLLSEEKLKI.

It localises to the nucleus. The chain is THAP domain-containing protein 5 (THAP5) from Gallus gallus (Chicken).